A 285-amino-acid polypeptide reads, in one-letter code: 4-hydroxybenzoate octaprenyltransferase (285 aa).

The next 8 membrane-spanning stretches (helical) occupy residues Leu28 to Val48, Ile86 to Val106, Asn110 to Phe130, Phe133 to Phe153, Trp165 to Val185, Ile210 to Leu230, Trp232 to Ile252, and Ala262 to Ile284.

It belongs to the UbiA prenyltransferase family. It depends on Mg(2+) as a cofactor.

Its subcellular location is the cell inner membrane. It catalyses the reaction all-trans-octaprenyl diphosphate + 4-hydroxybenzoate = 4-hydroxy-3-(all-trans-octaprenyl)benzoate + diphosphate. Its pathway is cofactor biosynthesis; ubiquinone biosynthesis. Catalyzes the prenylation of para-hydroxybenzoate (PHB) with an all-trans polyprenyl group. Mediates the second step in the final reaction sequence of ubiquinone-8 (UQ-8) biosynthesis, which is the condensation of the polyisoprenoid side chain with PHB, generating the first membrane-bound Q intermediate 3-octaprenyl-4-hydroxybenzoate. The polypeptide is 4-hydroxybenzoate octaprenyltransferase (Cupriavidus necator (strain ATCC 17699 / DSM 428 / KCTC 22496 / NCIMB 10442 / H16 / Stanier 337) (Ralstonia eutropha)).